The sequence spans 270 residues: Phosphate import ATP-binding protein PstB 2 (270 aa).

Positions 25–265 (LQAKDINIYY…PEKKQTEDYI (241 aa)) constitute an ABC transporter domain. Residue 57–64 (GPSGCGKS) coordinates ATP.

This sequence belongs to the ABC transporter superfamily. Phosphate importer (TC 3.A.1.7) family. As to quaternary structure, the complex is composed of two ATP-binding proteins (PstB), two transmembrane proteins (PstC and PstA) and a solute-binding protein (PstS).

It is found in the cell membrane. It catalyses the reaction phosphate(out) + ATP + H2O = ADP + 2 phosphate(in) + H(+). Functionally, part of the ABC transporter complex PstSACB involved in phosphate import. Responsible for energy coupling to the transport system. In Shouchella clausii (strain KSM-K16) (Alkalihalobacillus clausii), this protein is Phosphate import ATP-binding protein PstB 2.